The following is a 353-amino-acid chain: Hydrazine synthase subunit gamma (353 aa).

Positions 1–39 are cleaved as a signal peptide; sequence MAREMRLGGKERMKTGVVKIGLVAALGVVGLISAGGVYA. Residues Cys102, Cys105, and His106 each coordinate heme c. Ca(2+)-binding residues include Asp118, Leu119, Glu122, Gly123, Ser126, Asn129, Leu139, and Pro141. 4 residues coordinate heme c: Cys165, Cys225, Cys228, and His229. A Cytochrome c domain is found at 209–353; the sequence is EAQKRGQKIF…QDLVEYLKAL (145 aa). Ca(2+) is bound by residues Asp296, Ser306, Gly307, and Thr308. Position 332 (His332) interacts with heme c.

As to quaternary structure, part of the hydrazine synthase complex that forms an elongated dimer of heterotrimers composed of one alpha, one beta and one gamma subunit. Heme c is required as a cofactor.

It localises to the anammoxosome. The enzyme catalyses hydrazine + 3 Fe(III)-[cytochrome c] + H2O = nitric oxide + 3 Fe(II)-[cytochrome c] + NH4(+) + 2 H(+). Its pathway is nitrogen metabolism. Its function is as follows. Component of the hydrazine synthase complex that catalyzes the condensation of nitric oxide (NO) with ammonium to form hydrazine. The gamma subunit catalyzes the first half-reaction, i.e. the three-electron reduction of nitric oxide to hydroxylamine; it may obtain electrons from the triheme cytochrome c kuste2854. Is involved in anaerobic ammonium oxidation (anammox), a biological process in which nitrite is used as the electron acceptor in the conversion of ammonium to dinitrogen gas (N2) and water; this bacterial process has a major role in the Earth's nitrogen cycle and has been estimated to synthesize up to 50% of the dinitrogen gas emitted into our atmosphere from the oceans. This is Hydrazine synthase subunit gamma from Kuenenia stuttgartiensis.